Reading from the N-terminus, the 330-residue chain is Protein qutG (330 aa).

Residues Glu-78, Asp-100, Leu-102, Asp-103, and Asp-251 each coordinate Mg(2+). Glu-78 contributes to the substrate binding site. Substrate is bound by residues Leu-102 to Thr-105 and Asp-251.

Belongs to the inositol monophosphatase superfamily.

Its function is as follows. Not known. Probably involved in quinate metabolism. The chain is Protein qutG (qutG) from Emericella nidulans (strain FGSC A4 / ATCC 38163 / CBS 112.46 / NRRL 194 / M139) (Aspergillus nidulans).